The following is a 421-amino-acid chain: MWYHKLLHQQSRLRNLMKRGNIAQGLHLSNFKSLFSSSIHWCHTTSKSVNCTWHQHEDHLELQYAGTVMRFDYVWLRDHCRSASCYNSKTHQRSLDTASVDLCIKPKTVHLDETMLFFTWPDGHVTRYDLDWLVKNSYEGQKQKVIQPRILWNSKLYQQAQVPSVDFQCFLETNEGLKKFLQNFLLYGIAFVENVPPTEEHTEKLAERISLIRETIYGRMWYFTSDFSRGDTAYTKLALDRHTDTTYFQEPCGIQVFHCLKHEGTGGRTLLVDGFYAAQQVLQKAPEEFELLSKVPLKHEYIENVGQCHNHMIGVGPILNIYPWNKELYLIRYNNYDRAVINTVPYDVVHRWYTAHRTLTTELRRPENELWVKLKPGKVLFIDNWRVLHGRESFTGYRQLCGCYLTRDDVLNTARLLGLHA.

A mitochondrion-targeting transit peptide spans methionine 1–asparagine 15. N6-acetyllysine occurs at positions 179 and 236. 3 residues coordinate Fe cation: histidine 242, aspartate 244, and histidine 389.

The protein belongs to the gamma-BBH/TMLD family. In terms of assembly, homodimer. Requires Fe(2+) as cofactor. It depends on L-ascorbate as a cofactor.

It is found in the mitochondrion matrix. The enzyme catalyses N(6),N(6),N(6)-trimethyl-L-lysine + 2-oxoglutarate + O2 = (3S)-3-hydroxy-N(6),N(6),N(6)-trimethyl-L-lysine + succinate + CO2. Its pathway is amine and polyamine biosynthesis; carnitine biosynthesis. Functionally, converts trimethyllysine (TML) into hydroxytrimethyllysine (HTML). The protein is Trimethyllysine dioxygenase, mitochondrial (Tmlhe) of Mus musculus (Mouse).